Consider the following 276-residue polypeptide: Ammonia monooxygenase alpha subunit (276 aa).

A run of 5 helical transmembrane segments spans residues 29 to 49 (VYFP…FMLL), 66 to 86 (PVVT…YLWV), 96 to 116 (LCVV…FYWW), 123 to 143 (FVTP…LYLT), and 150 to 170 (ALVG…PIFG). 3 residues coordinate Cu(+): D187, H191, and H204. The helical transmembrane segment at 219-239 (VIAAFFSAFVSMLMFTVWWYL) threads the bilayer.

In terms of assembly, the soluble ammonia monooxygenase is a nonamer composed of three alpha subunits (AmoA), three beta subunits (AmoB) and three gamma subunits (Cytochrome c1 PetC). Requires Cu(+) as cofactor.

It localises to the cell membrane. The protein resides in the cytoplasm. The enzyme catalyses AH2 + NH4(+) + O2 = hydroxylamine + A + H2O + H(+). In vitro, inhibited by acetylene. In fact, acetylene is oxidized to ketene which binds irreversibly to His-191 of ammonia monooxygenase alpha subunit (AmoA). Part of the ammonia monooxygenase complex, which catalyzes the oxidation of ammonia to hydroxylamine, the first reaction in the process of ammonia oxidation to nitrite. The chain is Ammonia monooxygenase alpha subunit from Nitrosomonas europaea (strain ATCC 19718 / CIP 103999 / KCTC 2705 / NBRC 14298).